We begin with the raw amino-acid sequence, 352 residues long: Holliday junction branch migration complex subunit RuvB (352 aa).

The tract at residues 1-42 (MAIVSSSAGRADSQPPAAKSRVVDASPLPEEASPAREDGLRP) is disordered. The interval 13 to 201 (SQPPAAKSRV…FGLIQRLEFY (189 aa)) is large ATPase domain (RuvB-L). Residues 33–42 (SPAREDGLRP) show a composition bias toward basic and acidic residues. Positions 40, 41, 82, 85, 86, 87, 191, 201, and 238 each coordinate ATP. T86 contributes to the Mg(2+) binding site. The interval 202-273 (GLEDLQAIVE…LVDEALTLHR (72 aa)) is small ATPAse domain (RuvB-S). The tract at residues 276–352 (ARGLDASDRR…RRHLGWPELP (77 aa)) is head domain (RuvB-H). 2 residues coordinate DNA: R331 and R336.

Belongs to the RuvB family. As to quaternary structure, homohexamer. Forms an RuvA(8)-RuvB(12)-Holliday junction (HJ) complex. HJ DNA is sandwiched between 2 RuvA tetramers; dsDNA enters through RuvA and exits via RuvB. An RuvB hexamer assembles on each DNA strand where it exits the tetramer. Each RuvB hexamer is contacted by two RuvA subunits (via domain III) on 2 adjacent RuvB subunits; this complex drives branch migration. In the full resolvosome a probable DNA-RuvA(4)-RuvB(12)-RuvC(2) complex forms which resolves the HJ.

Its subcellular location is the cytoplasm. The enzyme catalyses ATP + H2O = ADP + phosphate + H(+). Functionally, the RuvA-RuvB-RuvC complex processes Holliday junction (HJ) DNA during genetic recombination and DNA repair, while the RuvA-RuvB complex plays an important role in the rescue of blocked DNA replication forks via replication fork reversal (RFR). RuvA specifically binds to HJ cruciform DNA, conferring on it an open structure. The RuvB hexamer acts as an ATP-dependent pump, pulling dsDNA into and through the RuvAB complex. RuvB forms 2 homohexamers on either side of HJ DNA bound by 1 or 2 RuvA tetramers; 4 subunits per hexamer contact DNA at a time. Coordinated motions by a converter formed by DNA-disengaged RuvB subunits stimulates ATP hydrolysis and nucleotide exchange. Immobilization of the converter enables RuvB to convert the ATP-contained energy into a lever motion, pulling 2 nucleotides of DNA out of the RuvA tetramer per ATP hydrolyzed, thus driving DNA branch migration. The RuvB motors rotate together with the DNA substrate, which together with the progressing nucleotide cycle form the mechanistic basis for DNA recombination by continuous HJ branch migration. Branch migration allows RuvC to scan DNA until it finds its consensus sequence, where it cleaves and resolves cruciform DNA. This chain is Holliday junction branch migration complex subunit RuvB, found in Prochlorococcus marinus (strain MIT 9303).